Here is a 331-residue protein sequence, read N- to C-terminus: Hyaluronidase (331 aa).

Disulfide bonds link Cys-19-Cys-308 and Cys-185-Cys-197. N-linked (GlcNAc...) asparagine glycosylation occurs at Asn-79. The active-site Proton donor is Glu-109. The N-linked (GlcNAc...) asparagine glycan is linked to Asn-325.

It belongs to the glycosyl hydrolase 56 family. Expressed by the venom gland.

The protein resides in the secreted. It catalyses the reaction Random hydrolysis of (1-&gt;4)-linkages between N-acetyl-beta-D-glucosamine and D-glucuronate residues in hyaluronate.. In terms of biological role, hydrolyzes high molecular weight hyaluronic acid to produce small oligosaccharides. The sequence is that of Hyaluronidase from Dolichovespula maculata (Bald-faced hornet).